Consider the following 330-residue polypeptide: Nodulation protein D 2 (330 aa).

The HTH lysR-type domain maps to 6-63 (LDLNLLVALDALITERNLSSAARKINLSQPAMSAAVARLRKHFRDELFGMRGRELVLS). Residues 23–42 (LSSAARKINLSQPAMSAAVA) constitute a DNA-binding region (H-T-H motif). The interval 308 to 330 (RVTSSPEDAEPPGHFVRSVSPLP) is disordered.

Belongs to the LysR transcriptional regulatory family.

NodD regulates the expression of the nodABCFE genes which encode other nodulation proteins. NodD is also a negative regulator of its own expression. Binds flavonoids as inducers. The chain is Nodulation protein D 2 (nodD2) from Bradyrhizobium diazoefficiens (strain JCM 10833 / BCRC 13528 / IAM 13628 / NBRC 14792 / USDA 110).